The following is a 338-amino-acid chain: STEAP1 protein (338 aa).

Helical transmembrane passes span 70–90 (WHLP…YTLL) and 118–138 (PMVS…AAIV). Residues 117–264 (LPMVSITLLA…TLGIVSLLLG (148 aa)) enclose the Ferric oxidoreductase domain. 2 residues coordinate FAD: Q139 and R160. Transmembrane regions (helical) follow at residues 163–183 (FGLL…SYPM), 217–237 (IYVS…VTSI), 252–272 (IQST…LIFA), and 290–310 (FMIA…LLLP). H174 is a heme b binding site. FAD is bound by residues S236 and Q253. Position 267 (H267) interacts with heme b.

The protein belongs to the STEAP family. In terms of assembly, homotrimer. Requires FAD as cofactor. The cofactor is heme b.

It localises to the endosome membrane. The protein localises to the cell membrane. Its function is as follows. Does not function as a metalloreductase due to the absence of binding sites for the electron-donating substrate NADPH. This chain is STEAP1 protein (STEAP1), found in Sus scrofa (Pig).